The sequence spans 421 residues: D-amino acid dehydrogenase (421 aa).

Position 4–18 (Val4–Trp18) interacts with FAD.

The protein belongs to the DadA oxidoreductase family. FAD is required as a cofactor.

The catalysed reaction is a D-alpha-amino acid + A + H2O = a 2-oxocarboxylate + AH2 + NH4(+). Its function is as follows. Oxidative deamination of D-amino acids. This is D-amino acid dehydrogenase from Vibrio cholerae serotype O1 (strain ATCC 39315 / El Tor Inaba N16961).